A 350-amino-acid polypeptide reads, in one-letter code: Protein disulfide isomerase Creld2 (350 aa).

The N-terminal stretch at M1–A22 is a signal peptide. Residues C29–C32 carry the CXXC motif. 4 cysteine pairs are disulfide-bonded: C29–C32, C138–C152, C146–C164, and C166–C175. Residues D134–I176 enclose the EGF-like 1 domain. An FU 1 repeat occupies H191–P238. A glycan (N-linked (GlcNAc...) asparagine) is linked at N249. One copy of the FU 2 repeat lies at S251–A298. The short motif at C261–C264 is the CXXC element. Cystine bridges form between C261-C264, C292-C306, C299-C315, and C317-C328. One can recognise an EGF-like 2; calcium-binding domain in the interval D288–V329.

It belongs to the CRELD family. Interacts with CHRNA4. Component of a complex containing at least CRELD2, MANF, MATN3 and PDIA4. As to expression, expressed in chondrocytes (at protein level).

It localises to the endoplasmic reticulum. It carries out the reaction Catalyzes the rearrangement of -S-S- bonds in proteins.. Its function is as follows. Protein disulfide isomerase. Might play a role in the unfolded protein response. May regulate transport of alpha4-beta2 neuronal acetylcholine receptor. This chain is Protein disulfide isomerase Creld2 (Creld2), found in Mus musculus (Mouse).